The primary structure comprises 211 residues: RILP-like protein 2 (211 aa).

Positions 1-32 are disordered; it reads MEEPPVREEEEEEGEEDEERDEVGPEGALGKS. Positions 8–21 are enriched in acidic residues; that stretch reads EEEEEEGEEDEERD. The region spanning 24 to 106 is the RH1 domain; that stretch reads GPEGALGKSP…RKEVEGLRRQ (83 aa). Residues 70–164 are a coiled coil; that stretch reads RVLEMLEALV…VQEELQCYKS (95 aa). Residue Ser107 is modified to Phosphoserine. One can recognise an RH2 domain in the interval 130 to 201; it reads RPRFTLQELR…NKEEKTIIKK (72 aa). A disordered region spans residues 166–190; sequence LIPPREGPGGRREKDAVVTSAKNAG.

It belongs to the RILPL family. As to quaternary structure, homodimer. Interacts with RAC1. Interacts (via N-terminus) with MYO5A, the interaction is required for its role in dendrite formation. Interacts with RAB8A; interaction is dependent on the phosphorylation of RAB8A on 'Thr-72'. Interacts with RAB10 and RAB12; interaction is dependent on the phosphorylation of 'Thr-73' on RAB10 and 'Ser-105' on RAB12. As to expression, widely expressed. Expressed at higher level in lung.

The protein resides in the cytoplasm. It localises to the cytosol. The protein localises to the cytoskeleton. Its subcellular location is the microtubule organizing center. It is found in the centrosome. The protein resides in the cell projection. It localises to the cilium. In terms of biological role, involved in cell shape and neuronal morphogenesis, positively regulating the establishment and maintenance of dendritic spines. Plays a role in cellular protein transport, including protein transport away from primary cilia. May function via activation of RAC1 and PAK1. This chain is RILP-like protein 2 (RILPL2), found in Homo sapiens (Human).